The sequence spans 391 residues: tRNA (cytosine(38)-C(5))-methyltransferase (391 aa).

The 388-residue stretch at 4–391 folds into the SAM-dependent MTase C5-type domain; that stretch reads LRVLELYSGI…VSKLLTVLCE (388 aa). Residues 13-15, Asp-34, 57-58, and Ser-76 contribute to the S-adenosyl-L-methionine site; these read IGG and IE. The active site involves Cys-79. Residue Ser-376 participates in S-adenosyl-L-methionine binding.

This sequence belongs to the class I-like SAM-binding methyltransferase superfamily. C5-methyltransferase family.

It localises to the cytoplasm. It carries out the reaction cytidine(38) in tRNA + S-adenosyl-L-methionine = 5-methylcytidine(38) in tRNA + S-adenosyl-L-homocysteine + H(+). Its function is as follows. Specifically methylates cytosine 38 in the anticodon loop of tRNA(Asp). Has higher activity on tRNA(Asp) modified with queuosine at position 34. This chain is tRNA (cytosine(38)-C(5))-methyltransferase (Trdmt1), found in Rattus norvegicus (Rat).